The primary structure comprises 274 residues: Large ribosomal subunit protein uL2 (274 aa).

Residues 223–256 are disordered; the sequence is VAMNPVDHPHGGGEGRTSGGRHPVTPWGIPTKGY.

The protein belongs to the universal ribosomal protein uL2 family. As to quaternary structure, part of the 50S ribosomal subunit. Forms a bridge to the 30S subunit in the 70S ribosome.

Functionally, one of the primary rRNA binding proteins. Required for association of the 30S and 50S subunits to form the 70S ribosome, for tRNA binding and peptide bond formation. It has been suggested to have peptidyltransferase activity; this is somewhat controversial. Makes several contacts with the 16S rRNA in the 70S ribosome. The chain is Large ribosomal subunit protein uL2 from Trichlorobacter lovleyi (strain ATCC BAA-1151 / DSM 17278 / SZ) (Geobacter lovleyi).